The primary structure comprises 693 residues: MWPQPYLPPHPMMLEESRQNKLAAAKKKLKEYQQRKSPGIPAGAKTKKKKTDSSPETTTSGGCHSPGDSQYQELAVALESSSVTISQLNENIESLKQQKKQVEHQLEEAKKTNNEIHKAQMERLETINILTLEKADLKTTLYHTKRAARHFEEESKDLAGRLQYSLQRIQELERALCAVSTQQQEEDRSSSCREAVLQRWLQQTIKERALLNAHVTQVTESLKQVQLERDEYAKHIKGERARWQERMWKMSVEARTLKEEKKRDIHRIQELERSLSELKNQMAEPPSLAPPAVTSVVEQLQDEAKHLRQEVEGLEGKLQSQVENNQALSLLSKEQKQRLQEQEEMLREQEAQRVREQERLCEQNERLREQQKTLQEQGERLRKQEQRLRKQEERLRKEEERLQKQEKRLWDQEERLWKKEERLQKQEERLALSQNHKLDKQLAEPQCSFEDLNNEKKSALQLEQQVKELQEKLDEEHLEAASHQNQQLETQLSLVALPGEGDGGQHLDSEEEEAPRPTPNIPEDLESREATSSFMDLPKEKADGTEQVERRELGFVQPSGVTDGMRESFTVYESQGAVPNTRHQEMEDVIRLAQKEEEMKVKLLELQELVLPLVGNHEGHGKFLIAAQNPADEPTPGAPAPQELGAAGEQDVFYEVSLDNNVEPAPGAAREGSPHDNPTVQQIVQLSPVMQDT.

Residues 14-611 adopt a coiled-coil conformation; sequence LEESRQNKLA…KLLELQELVL (598 aa). 3 disordered regions span residues 20 to 69, 497 to 547, and 661 to 693; these read NKLA…PGDS, LPGE…GTEQ, and NVEPAPGAAREGSPHDNPTVQQIVQLSPVMQDT. A compositionally biased stretch (polar residues) spans 54 to 69; sequence SPETTTSGGCHSPGDS. Positions 537–547 are enriched in basic and acidic residues; that stretch reads LPKEKADGTEQ. Positions 676 to 693 are enriched in polar residues; sequence DNPTVQQIVQLSPVMQDT.

This sequence belongs to the GOLGA6 family. As to expression, highly expressed in seminiferous tubes in testis. Highly expressed in spermatids, barely detectable in late pachytene spermatocytes, and not detectable in spermatogonia. Detected at intermediate levels in pancreas and lymph nodes, and at much lower levels in spleen, peripheral blood leukocytes, skeletal muscle, liver, lung, placenta, brain and heart.

The polypeptide is Golgin subfamily A member 6A (GOLGA6A) (Homo sapiens (Human)).